Consider the following 92-residue polypeptide: Small ribosomal subunit protein uS19 (92 aa).

It belongs to the universal ribosomal protein uS19 family.

Functionally, protein S19 forms a complex with S13 that binds strongly to the 16S ribosomal RNA. The sequence is that of Small ribosomal subunit protein uS19 from Photorhabdus laumondii subsp. laumondii (strain DSM 15139 / CIP 105565 / TT01) (Photorhabdus luminescens subsp. laumondii).